We begin with the raw amino-acid sequence, 169 residues long: Shikimate kinase (169 aa).

Residue 12-17 coordinates ATP; that stretch reads AVGKTT. Residue Thr16 participates in Mg(2+) binding. Substrate contacts are provided by Asp34, Arg58, and Gly80. Arg119 serves as a coordination point for ATP. Substrate is bound at residue Arg139. Arg156 lines the ATP pocket.

This sequence belongs to the shikimate kinase family. As to quaternary structure, monomer. Requires Mg(2+) as cofactor.

It is found in the cytoplasm. It catalyses the reaction shikimate + ATP = 3-phosphoshikimate + ADP + H(+). Its pathway is metabolic intermediate biosynthesis; chorismate biosynthesis; chorismate from D-erythrose 4-phosphate and phosphoenolpyruvate: step 5/7. Functionally, catalyzes the specific phosphorylation of the 3-hydroxyl group of shikimic acid using ATP as a cosubstrate. This Alkaliphilus oremlandii (strain OhILAs) (Clostridium oremlandii (strain OhILAs)) protein is Shikimate kinase.